Here is a 394-residue protein sequence, read N- to C-terminus: Carbamoyl phosphate synthase small chain (394 aa).

Residues 1–188 (MIRKERAILA…PLPYAFPTLR (188 aa)) form a CPSase region. Residues S49, G240, and G242 each coordinate L-glutamine. Residues 192-379 (RVVLMDFGIK…IEEIDAFEGA (188 aa)) enclose the Glutamine amidotransferase type-1 domain. C267 serves as the catalytic Nucleophile. Positions 268, 271, 309, 311, and 312 each coordinate L-glutamine. Catalysis depends on residues H352 and E354.

The protein belongs to the CarA family. In terms of assembly, composed of two chains; the small (or glutamine) chain promotes the hydrolysis of glutamine to ammonia, which is used by the large (or ammonia) chain to synthesize carbamoyl phosphate. Tetramer of heterodimers (alpha,beta)4.

The catalysed reaction is hydrogencarbonate + L-glutamine + 2 ATP + H2O = carbamoyl phosphate + L-glutamate + 2 ADP + phosphate + 2 H(+). The enzyme catalyses L-glutamine + H2O = L-glutamate + NH4(+). Its pathway is amino-acid biosynthesis; L-arginine biosynthesis; carbamoyl phosphate from bicarbonate: step 1/1. It participates in pyrimidine metabolism; UMP biosynthesis via de novo pathway; (S)-dihydroorotate from bicarbonate: step 1/3. In terms of biological role, small subunit of the glutamine-dependent carbamoyl phosphate synthetase (CPSase). CPSase catalyzes the formation of carbamoyl phosphate from the ammonia moiety of glutamine, carbonate, and phosphate donated by ATP, constituting the first step of 2 biosynthetic pathways, one leading to arginine and/or urea and the other to pyrimidine nucleotides. The small subunit (glutamine amidotransferase) binds and cleaves glutamine to supply the large subunit with the substrate ammonia. The polypeptide is Carbamoyl phosphate synthase small chain (Deinococcus geothermalis (strain DSM 11300 / CIP 105573 / AG-3a)).